A 106-amino-acid polypeptide reads, in one-letter code: Small ribosomal subunit protein uS10 (106 aa).

It belongs to the universal ribosomal protein uS10 family. Part of the 30S ribosomal subunit.

Functionally, involved in the binding of tRNA to the ribosomes. This chain is Small ribosomal subunit protein uS10, found in Parasynechococcus marenigrum (strain WH8102).